A 357-amino-acid polypeptide reads, in one-letter code: Uroporphyrinogen decarboxylase (357 aa).

Substrate contacts are provided by residues 27-31 (RQAGR), D77, Y154, T209, and H327.

It belongs to the uroporphyrinogen decarboxylase family. In terms of assembly, homodimer.

Its subcellular location is the cytoplasm. The catalysed reaction is uroporphyrinogen III + 4 H(+) = coproporphyrinogen III + 4 CO2. The protein operates within porphyrin-containing compound metabolism; protoporphyrin-IX biosynthesis; coproporphyrinogen-III from 5-aminolevulinate: step 4/4. Functionally, catalyzes the decarboxylation of four acetate groups of uroporphyrinogen-III to yield coproporphyrinogen-III. The chain is Uroporphyrinogen decarboxylase from Nitrosococcus oceani (strain ATCC 19707 / BCRC 17464 / JCM 30415 / NCIMB 11848 / C-107).